The sequence spans 571 residues: Proline--tRNA ligase (571 aa).

Belongs to the class-II aminoacyl-tRNA synthetase family. ProS type 1 subfamily. Homodimer.

The protein localises to the cytoplasm. It catalyses the reaction tRNA(Pro) + L-proline + ATP = L-prolyl-tRNA(Pro) + AMP + diphosphate. In terms of biological role, catalyzes the attachment of proline to tRNA(Pro) in a two-step reaction: proline is first activated by ATP to form Pro-AMP and then transferred to the acceptor end of tRNA(Pro). As ProRS can inadvertently accommodate and process non-cognate amino acids such as alanine and cysteine, to avoid such errors it has two additional distinct editing activities against alanine. One activity is designated as 'pretransfer' editing and involves the tRNA(Pro)-independent hydrolysis of activated Ala-AMP. The other activity is designated 'posttransfer' editing and involves deacylation of mischarged Ala-tRNA(Pro). The misacylated Cys-tRNA(Pro) is not edited by ProRS. The protein is Proline--tRNA ligase of Pseudomonas aeruginosa (strain UCBPP-PA14).